The primary structure comprises 186 residues: Probable chorismate pyruvate-lyase (186 aa).

Substrate-binding residues include Arg-80, Leu-118, and Glu-170.

It belongs to the UbiC family.

It localises to the cytoplasm. The enzyme catalyses chorismate = 4-hydroxybenzoate + pyruvate. The protein operates within cofactor biosynthesis; ubiquinone biosynthesis. Its function is as follows. Removes the pyruvyl group from chorismate, with concomitant aromatization of the ring, to provide 4-hydroxybenzoate (4HB) for the ubiquinone pathway. In Pseudomonas savastanoi pv. phaseolicola (strain 1448A / Race 6) (Pseudomonas syringae pv. phaseolicola (strain 1448A / Race 6)), this protein is Probable chorismate pyruvate-lyase.